The following is a 218-amino-acid chain: Small ribosomal subunit protein uS3c (218 aa).

The 72-residue stretch at 47–118 folds into the KH type-2 domain; sequence VQKNMRTSSG…KLNIAVTRIA (72 aa).

Belongs to the universal ribosomal protein uS3 family. As to quaternary structure, part of the 30S ribosomal subunit.

The protein localises to the plastid. The protein resides in the chloroplast. In Atropa belladonna (Belladonna), this protein is Small ribosomal subunit protein uS3c (rps3).